The chain runs to 788 residues: Endonuclease MutS2 (788 aa).

332–339 (GPNTGGKT) contacts ATP. The 76-residue stretch at 713–788 (VDLRGMDAEE…GTGVTVVEIK (76 aa)) folds into the Smr domain.

It belongs to the DNA mismatch repair MutS family. MutS2 subfamily. As to quaternary structure, homodimer. Binds to stalled ribosomes, contacting rRNA.

Endonuclease that is involved in the suppression of homologous recombination and thus may have a key role in the control of bacterial genetic diversity. In terms of biological role, acts as a ribosome collision sensor, splitting the ribosome into its 2 subunits. Detects stalled/collided 70S ribosomes which it binds and splits by an ATP-hydrolysis driven conformational change. Acts upstream of the ribosome quality control system (RQC), a ribosome-associated complex that mediates the extraction of incompletely synthesized nascent chains from stalled ribosomes and their subsequent degradation. Probably generates substrates for RQC. The sequence is that of Endonuclease MutS2 from Clostridium botulinum (strain Loch Maree / Type A3).